The primary structure comprises 565 residues: Urocanate hydratase (565 aa).

Residues 61 to 62 (GG), Gln-139, 185 to 187 (GMG), Glu-205, Arg-210, 251 to 252 (NA), 272 to 276 (QTSAH), 282 to 283 (YL), and Tyr-331 contribute to the NAD(+) site. Cys-419 is a catalytic residue. The interval 453 to 472 (LDSGSVASPNRETESMRDGS) is disordered. A compositionally biased stretch (basic and acidic residues) spans 463 to 472 (RETESMRDGS). Gly-501 provides a ligand contact to NAD(+).

It belongs to the urocanase family. NAD(+) serves as cofactor.

Its subcellular location is the cytoplasm. It catalyses the reaction 4-imidazolone-5-propanoate = trans-urocanate + H2O. Its pathway is amino-acid degradation; L-histidine degradation into L-glutamate; N-formimidoyl-L-glutamate from L-histidine: step 2/3. In terms of biological role, catalyzes the conversion of urocanate to 4-imidazolone-5-propionate. In Pseudomonas syringae pv. tomato (strain ATCC BAA-871 / DC3000), this protein is Urocanate hydratase.